The sequence spans 206 residues: Small ribosomal subunit protein uS4 (206 aa).

Positions 96–156 (GRLDNVVYRM…EKAKKQARIK (61 aa)) constitute an S4 RNA-binding domain.

It belongs to the universal ribosomal protein uS4 family. In terms of assembly, part of the 30S ribosomal subunit. Contacts protein S5. The interaction surface between S4 and S5 is involved in control of translational fidelity.

Its function is as follows. One of the primary rRNA binding proteins, it binds directly to 16S rRNA where it nucleates assembly of the body of the 30S subunit. With S5 and S12 plays an important role in translational accuracy. The chain is Small ribosomal subunit protein uS4 from Aeromonas hydrophila subsp. hydrophila (strain ATCC 7966 / DSM 30187 / BCRC 13018 / CCUG 14551 / JCM 1027 / KCTC 2358 / NCIMB 9240 / NCTC 8049).